The primary structure comprises 706 residues: Dual specificity calcium/calmodulin-dependent 3',5'-cyclic nucleotide phosphodiesterase 1C (706 aa).

Met-1 is subject to N-acetylmethionine. Residues 123–146 (EKPRFKSIVHAVQAGIFVERMYRR) are calmodulin-binding. The PDEase domain occupies 151-528 (VGLSYPPAVI…ERWRAKVPKE (378 aa)). His-228 (proton donor) is an active-site residue. Zn(2+) contacts are provided by His-232, His-268, Asp-269, and Asp-376. Mg(2+) is bound at residue Asp-269. Disordered regions lie at residues 453–497 (LIDE…INNS) and 524–655 (KVPK…IKPP). 2 stretches are compositionally biased toward polar residues: residues 456–476 (ESSQTGGTGQRRSSLNSINSS) and 483–497 (VKSSGSDGSAPINNS). Composition is skewed to basic and acidic residues over residues 524 to 554 (KVPKEEKAKKEAEEKARLAAEEKQKEMEAKS), 580 to 597 (RKGDNPRGKNSKGEKAGE), and 603 to 630 (DLKDGKNKADKKDHSNTGNESKKTDGTK). Polar residues predominate over residues 638–647 (APSTSSTSRI).

Belongs to the cyclic nucleotide phosphodiesterase family. PDE1 subfamily. In terms of assembly, homodimer. The cofactor is Zn(2+). Requires Mg(2+) as cofactor. Highly expressed in testis and at moderate levels in heart. As to expression, expressed at a moderate level in brain, the cerebellum, testis, heart and olfactory epithelium. In terms of tissue distribution, highly expressed in olfactory epithelium and at very low levels, if any, in other tissues. In the cochlea, expressed in the inner and outer hair cells (at protein level). In the brain, highly expressed in the neurons of the granule layer of the cerebellum, some Purkinje cells, the central amygdaloid nucleus, and the interpolar spinal trigem nucleus and, at moderate levels, in the glomerular and external plexiform layer of the olfactory bulb as well as in parts of the caudate-putamen and olfactory tubercle.

It is found in the lysosome. The catalysed reaction is a nucleoside 3',5'-cyclic phosphate + H2O = a nucleoside 5'-phosphate + H(+). It carries out the reaction 3',5'-cyclic GMP + H2O = GMP + H(+). It catalyses the reaction 3',5'-cyclic AMP + H2O = AMP + H(+). Its activity is regulated as follows. Type I PDE are activated by the binding of calmodulin in the presence of Ca(2+). Different splice variants may have different sensitivities to Ca(2+). Exhibits a higher sensitivity to Ca(2+) stimulation than isoforms 1 and 2. Calmodulin-dependent cyclic nucleotide phosphodiesterase with a dual specificity for cAMP and cGMP, which are key regulators of many important physiological processes. Exhibits high affinity for both cAMP and cGMP. Modulates the amplitude and duration of the cAMP signal in sensory cilia in response to odorant stimulation, hence contributing to the generation of action potentials. Regulates smooth muscle cell proliferation. Regulates the stability of growth factor receptors, including PDGFRB. This Mus musculus (Mouse) protein is Dual specificity calcium/calmodulin-dependent 3',5'-cyclic nucleotide phosphodiesterase 1C.